A 123-amino-acid polypeptide reads, in one-letter code: Small ribosomal subunit protein uS12 (123 aa).

3-methylthioaspartic acid is present on Asp-89.

Belongs to the universal ribosomal protein uS12 family. As to quaternary structure, part of the 30S ribosomal subunit. Contacts proteins S8 and S17. May interact with IF1 in the 30S initiation complex.

With S4 and S5 plays an important role in translational accuracy. Its function is as follows. Interacts with and stabilizes bases of the 16S rRNA that are involved in tRNA selection in the A site and with the mRNA backbone. Located at the interface of the 30S and 50S subunits, it traverses the body of the 30S subunit contacting proteins on the other side and probably holding the rRNA structure together. The combined cluster of proteins S8, S12 and S17 appears to hold together the shoulder and platform of the 30S subunit. The sequence is that of Small ribosomal subunit protein uS12 from Caulobacter vibrioides (strain ATCC 19089 / CIP 103742 / CB 15) (Caulobacter crescentus).